A 170-amino-acid polypeptide reads, in one-letter code: NADH-quinone oxidoreductase subunit B (170 aa).

Residues C37, C38, C102, and C131 each contribute to the [4Fe-4S] cluster site.

The protein belongs to the complex I 20 kDa subunit family. In terms of assembly, NDH-1 is composed of 14 different subunits. Subunits NuoB, C, D, E, F, and G constitute the peripheral sector of the complex. The cofactor is [4Fe-4S] cluster.

The protein localises to the cell inner membrane. It carries out the reaction a quinone + NADH + 5 H(+)(in) = a quinol + NAD(+) + 4 H(+)(out). NDH-1 shuttles electrons from NADH, via FMN and iron-sulfur (Fe-S) centers, to quinones in the respiratory chain. The immediate electron acceptor for the enzyme in this species is believed to be ubiquinone. Couples the redox reaction to proton translocation (for every two electrons transferred, four hydrogen ions are translocated across the cytoplasmic membrane), and thus conserves the redox energy in a proton gradient. This Citrifermentans bemidjiense (strain ATCC BAA-1014 / DSM 16622 / JCM 12645 / Bem) (Geobacter bemidjiensis) protein is NADH-quinone oxidoreductase subunit B.